A 298-amino-acid chain; its full sequence is Thymidylate synthase (298 aa).

Residues Arg25 and 159-160 (RR) each bind dUMP. Residue Cys179 is the Nucleophile of the active site. Residues 200 to 203 (RSVD), Asn211, and 241 to 243 (HLY) each bind dUMP. A (6R)-5,10-methylene-5,6,7,8-tetrahydrofolate-binding site is contributed by Asp203. (6R)-5,10-methylene-5,6,7,8-tetrahydrofolate is bound at residue Ala297.

This sequence belongs to the thymidylate synthase family. Bacterial-type ThyA subfamily. In terms of assembly, homodimer.

It is found in the cytoplasm. It catalyses the reaction dUMP + (6R)-5,10-methylene-5,6,7,8-tetrahydrofolate = 7,8-dihydrofolate + dTMP. Its pathway is pyrimidine metabolism; dTTP biosynthesis. Its function is as follows. Catalyzes the reductive methylation of 2'-deoxyuridine-5'-monophosphate (dUMP) to 2'-deoxythymidine-5'-monophosphate (dTMP) while utilizing 5,10-methylenetetrahydrofolate (mTHF) as the methyl donor and reductant in the reaction, yielding dihydrofolate (DHF) as a by-product. This enzymatic reaction provides an intracellular de novo source of dTMP, an essential precursor for DNA biosynthesis. The protein is Thymidylate synthase of Cereibacter sphaeroides (strain ATCC 17025 / ATH 2.4.3) (Rhodobacter sphaeroides).